Consider the following 134-residue polypeptide: Large ribosomal subunit protein eL32 (134 aa).

This sequence belongs to the eukaryotic ribosomal protein eL32 family.

This Drosophila acanthoptera (Fruit fly) protein is Large ribosomal subunit protein eL32 (RpL32).